The primary structure comprises 148 residues: Puroindoline-B (148 aa).

The signal sequence occupies residues 1–19 (MKTLFLLALLALVASTTFA). Residues 20–29 (QYSEVGGWYN) constitute a propeptide that is removed on maturation.

Post-translationally, five disulfide bonds are present. In terms of tissue distribution, endosperm and aleurone layer of developing kernels. In the aleurone layer, mainly localized to starch granules and the surface of the plasma membrane, forming a uniform layer, also abundant in the intercellular space. In the endosperm, mainly localized to starch granules and the plasma membrane, but less abundant in the intercellular space. Not found in roots or coleoptiles.

It is found in the membrane. Its subcellular location is the secreted. The protein localises to the extracellular space. Acts as a membranotoxin, probably through its antibacterial and antifungal activities, contributing to the defense mechanism of the plant against predators. Forms monovalent cation-selective ion channels in membranes. Has antibacterial activity against the Gram-positive bacteria S.aureus and C.michiganensis, and the Gram-negative bacteria E.coli, P.syringae pv phaseoli, A.tumefaciens and E.carotovora subsp carotovora. Acts synergistically with PINA against bacteria. Contributes to grain texture and hardness. The protein is Puroindoline-B (PINB) of Triticum aestivum (Wheat).